Here is a 588-residue protein sequence, read N- to C-terminus: Tetratricopeptide repeat protein 39B (588 aa).

TPR repeat units lie at residues 294 to 327 (SIILFYAARIDILKGRFEQAQETFQKCIVSQQEW), 485 to 518 (CLVQLLKGVCLKHLGRLLQAELCFNQVIQSEKRV), and 526 to 559 (PFTFYELGLLYKDQGDRDKAIRYIETAKSNYKDY).

The protein belongs to the TTC39 family.

Its function is as follows. May be involved in lipid metabolism. The chain is Tetratricopeptide repeat protein 39B (ttc39b) from Xenopus tropicalis (Western clawed frog).